The primary structure comprises 1113 residues: Atrial natriuretic peptide-converting enzyme (1113 aa).

At 1–112 the chain is on the cytoplasmic side; it reads MGRVSFSVRV…QKLVTANLLR (112 aa). The helical; Signal-anchor for type II membrane protein transmembrane segment at 113–133 threads the bilayer; that stretch reads FLLLVLIPCICALIVLLAILL. Residues 134–1113 lie on the Extracellular side of the membrane; that stretch reads SFVGTLKRVY…QTFLQKKSQG (980 aa). Residues Asn147, Asn202, and Asn208 are each glycosylated (N-linked (GlcNAc...) asparagine). The disordered stretch occupies residues 176–202; it reads APSLPPSQSTPAWTPRAPSPEDQSHRN. The region spanning 201–327 is the FZ 1 domain; the sequence is RNTSTCMNIT…SSVRKSCFSL (127 aa). Intrachain disulfides connect Cys206–Cys266, Cys214–Cys259, Cys250–Cys290, Cys279–Cys324, Cys283–Cys307, Cys337–Cys350, Cys345–Cys363, and Cys357–Cys372. Residues Asn298 and Asn317 are each glycosylated (N-linked (GlcNAc...) asparagine). LDL-receptor class A domains are found at residues 336 to 372, 373 to 408, 409 to 445, and 446 to 483; these read LCGG…EAHC, NCSK…EQNC, DCNL…EVNC, and SCHS…ENCS. The N-linked (GlcNAc...) asparagine glycan is linked to Asn373. Intrachain disulfides connect Cys374–Cys386, Cys381–Cys399, Cys393–Cys408, Cys410–Cys423, Cys418–Cys436, Cys430–Cys445, Cys447–Cys460, Cys455–Cys473, and Cys467–Cys482. A glycan (N-linked (GlcNAc...) asparagine) is linked at Asn411. Asn444 carries an N-linked (GlcNAc...) asparagine glycan. 3 N-linked (GlcNAc...) asparagine glycosylation sites follow: Asn481, Asn519, and Asn537. Residues 518–641 enclose the FZ 2 domain; that stretch reads SNCSQCEPIT…SSDNQTCLLP (124 aa). 14 disulfides stabilise this stretch: Cys523-Cys586, Cys531-Cys579, Cys570-Cys608, Cys597-Cys638, Cys601-Cys625, Cys648-Cys660, Cys655-Cys673, Cys667-Cys682, Cys684-Cys698, Cys692-Cys711, Cys705-Cys720, Cys723-Cys735, Cys730-Cys748, and Cys742-Cys757. Residue Asn635 is glycosylated (N-linked (GlcNAc...) asparagine). 3 consecutive LDL-receptor class A domains span residues 647–682, 683–721, and 722–757; these read ECSP…EENC, GCKE…KNCS, and FCQD…EWGC. An N-linked (GlcNAc...) asparagine glycan is attached at Asn719. The SRCR domain maps to 758-853; sequence VTLSKNGNSS…SRSEISLLCS (96 aa). Residues Asn765 and Asn828 are each glycosylated (N-linked (GlcNAc...) asparagine). Disulfide bonds link Cys782/Cys884, Cys857/Cys979, Cys895/Cys911, Cys993/Cys1058, Cys1022/Cys1037, and Cys1048/Cys1077. The Peptidase S1 domain maps to 869 to 1102; the sequence is ILGGRTSRPG…FVGWIERQIY (234 aa). Residues His910 and Asp959 each act as charge relay system in the active site. Residue Asn970 is glycosylated (N-linked (GlcNAc...) asparagine). The active-site Charge relay system is Ser1052. Asn1089 carries an N-linked (GlcNAc...) asparagine glycan.

The protein belongs to the peptidase S1 family. In terms of processing, N-glycosylated; required for processing and activation. Post-translationally, activated through proteolytic processing by a trypsin-like protease; cleaved into a N-terminal propeptide and an activated corin protease fragment. Atrial natriuretic peptide-converting enzyme, 180 kDa soluble fragment is produced by cleavage by ADAM10. Cleavage by ADAM10 to produce soluble 180 kDa soluble fragment takes place after the transmembrane region and before FZ 1. A disulfide bond links the activated corin protease fragment and the N-terminal propeptide. The disulfide bond also links the activated corin protease fragment with Atrial natriuretic peptide-converting enzyme, 180 kDa soluble fragment. Highly expressed in heart. Also expressed in pregnant uterus.

It localises to the cell membrane. It is found in the secreted. In terms of biological role, serine-type endopeptidase involved in atrial natriuretic peptide (NPPA) processing. Converts through proteolytic cleavage the non-functional propeptide NPPA into the active hormone, thereby regulating blood pressure in heart and promoting natriuresis, diuresis and vasodilation. Proteolytic cleavage of pro-NPPA also plays a role in female pregnancy by promoting trophoblast invasion and spiral artery remodeling in uterus. Also acts as a regulator of sodium reabsorption in kidney. May also process pro-NPPB the B-type natriuretic peptide. This is Atrial natriuretic peptide-converting enzyme (Corin) from Mus musculus (Mouse).